The following is a 51-amino-acid chain: MEEEKAVSLAKEIIELDIKRDEMLETFMQLAGEQAFQLLRSVQNGQYRKSS.

Residues 3-30 (EEKAVSLAKEIIELDIKRDEMLETFMQL) adopt a coiled-coil conformation.

This is an uncharacterized protein from Bacillus subtilis (strain 168).